A 183-amino-acid polypeptide reads, in one-letter code: Ribosome-recycling factor (183 aa).

It belongs to the RRF family.

It localises to the cytoplasm. Responsible for the release of ribosomes from messenger RNA at the termination of protein biosynthesis. May increase the efficiency of translation by recycling ribosomes from one round of translation to another. In Ureaplasma urealyticum serovar 10 (strain ATCC 33699 / Western), this protein is Ribosome-recycling factor.